Reading from the N-terminus, the 799-residue chain is ATP synthase subunit alpha (799 aa).

The ATP synthase alpha chain stretch occupies residues 1–549 (MTDNKNHSLI…EEVSLKPTTE (549 aa)). Residue 170–177 (GDRQTGKT) participates in ATP binding. Positions 550–799 (TSEAVQIEEK…KGPSGFTYLK (250 aa)) are unknown.

The protein belongs to the ATPase alpha/beta chains family. In terms of assembly, F-type ATPases have 2 components, CF(1) - the catalytic core - and CF(0) - the membrane proton channel. CF(1) has five subunits: alpha(3), beta(3), gamma(1), delta(1), epsilon(1). CF(0) has three main subunits: a(1), b(2) and c(9-12). The alpha and beta chains form an alternating ring which encloses part of the gamma chain. CF(1) is attached to CF(0) by a central stalk formed by the gamma and epsilon chains, while a peripheral stalk is formed by the delta and b chains.

The protein resides in the cell membrane. The catalysed reaction is ATP + H2O + 4 H(+)(in) = ADP + phosphate + 5 H(+)(out). Produces ATP from ADP in the presence of a proton gradient across the membrane. The alpha chain is a regulatory subunit. This chain is ATP synthase subunit alpha (atpA), found in Ureaplasma parvum serovar 3 (strain ATCC 27815 / 27 / NCTC 11736).